We begin with the raw amino-acid sequence, 189 residues long: Interferon alpha-F (189 aa).

The signal sequence occupies residues 1 to 23 (MAPAWSLLLALLLLSCNAICSLG). Cystine bridges form between C24–C122 and C52–C162.

This sequence belongs to the alpha/beta interferon family.

It is found in the secreted. Its function is as follows. Produced by macrophages, IFN-alpha have antiviral activities. Interferon stimulates the production of two enzymes: a protein kinase and an oligoadenylate synthetase. The chain is Interferon alpha-F (IFNAF) from Bos taurus (Bovine).